The primary structure comprises 118 residues: Fluoride-specific ion channel FluC 1 (118 aa).

2 consecutive transmembrane segments (helical) span residues 5-25 (FLLVGFGAALGAMLRYGISVL) and 47-67 (FLLGFLVSSALGPVWQLFLGT). 2 residues coordinate Na(+): Gly-71 and Thr-74. The helical transmembrane segment at 98–118 (YLGFTYVFGLIAAFLGMMLGV) threads the bilayer.

Belongs to the fluoride channel Fluc/FEX (TC 1.A.43) family.

Its subcellular location is the cell membrane. It catalyses the reaction fluoride(in) = fluoride(out). Na(+) is not transported, but it plays an essential structural role and its presence is essential for fluoride channel function. Its function is as follows. Fluoride-specific ion channel. Important for reducing fluoride concentration in the cell, thus reducing its toxicity. In Listeria monocytogenes serovar 1/2a (strain ATCC BAA-679 / EGD-e), this protein is Fluoride-specific ion channel FluC 1.